Consider the following 306-residue polypeptide: Mycothiol acetyltransferase (306 aa).

2 consecutive N-acetyltransferase domains span residues 5 to 162 and 155 to 306; these read VWAE…TFVP and VRLR…AQGS. Residues 82–84 and 90–95 contribute to the acetyl-CoA site; these read LIV and RRGHGT. 1D-myo-inositol 2-(L-cysteinylamino)-2-deoxy-alpha-D-glucopyranoside contacts are provided by Glu-182, Lys-222, and Glu-238. Residues 242 to 244 and 249 to 255 contribute to the acetyl-CoA site; these read VGV and QGGGLGK. Tyr-276 contributes to the 1D-myo-inositol 2-(L-cysteinylamino)-2-deoxy-alpha-D-glucopyranoside binding site.

It belongs to the acetyltransferase family. MshD subfamily. Monomer.

It carries out the reaction 1D-myo-inositol 2-(L-cysteinylamino)-2-deoxy-alpha-D-glucopyranoside + acetyl-CoA = mycothiol + CoA + H(+). Functionally, catalyzes the transfer of acetyl from acetyl-CoA to desacetylmycothiol (Cys-GlcN-Ins) to form mycothiol. This is Mycothiol acetyltransferase from Saccharomonospora viridis (strain ATCC 15386 / DSM 43017 / JCM 3036 / CCUG 5913 / NBRC 12207 / NCIMB 9602 / P101) (Thermoactinomyces viridis).